The sequence spans 466 residues: 3-isopropylmalate dehydratase large subunit (466 aa).

[4Fe-4S] cluster is bound by residues Cys346, Cys406, and Cys409.

The protein belongs to the aconitase/IPM isomerase family. LeuC type 1 subfamily. In terms of assembly, heterodimer of LeuC and LeuD. Requires [4Fe-4S] cluster as cofactor.

It catalyses the reaction (2R,3S)-3-isopropylmalate = (2S)-2-isopropylmalate. Its pathway is amino-acid biosynthesis; L-leucine biosynthesis; L-leucine from 3-methyl-2-oxobutanoate: step 2/4. Its function is as follows. Catalyzes the isomerization between 2-isopropylmalate and 3-isopropylmalate, via the formation of 2-isopropylmaleate. The polypeptide is 3-isopropylmalate dehydratase large subunit (Alteromonas mediterranea (strain DSM 17117 / CIP 110805 / LMG 28347 / Deep ecotype)).